A 687-amino-acid polypeptide reads, in one-letter code: A-kinase anchor protein 8 (687 aa).

Residues methionine 1–phenylalanine 195 are interaction with MCM2. The tract at residues methionine 1–phenylalanine 210 is interaction with DPY30. Residue serine 72 is modified to Phosphoserine. Positions serine 104–serine 124 are disordered. Arginine 109 is subject to Asymmetric dimethylarginine; alternate. The residue at position 109 (arginine 109) is an Omega-N-methylarginine; alternate. Residues arginine 109 to glycine 118 are compositionally biased toward gly residues. Residues arginine 109–serine 201 form an interaction with DDX5 region. The tract at residues arginine 127–tyrosine 152 is nuclear matrix targeting site. Residues glycine 189–serine 221 form a disordered region. Serine 199 is subject to Phosphoserine. Residues arginine 233 and arginine 277 each carry the omega-N-methylarginine modification. Residues serine 278–aspartate 380 are disordered. Composition is skewed to basic and acidic residues over residues arginine 281–glycine 295 and proline 312–serine 321. The short motif at arginine 287–lysine 304 is the Bipartite nuclear localization signal element. Lysine 315 participates in a covalent cross-link: Glycyl lysine isopeptide (Lys-Gly) (interchain with G-Cter in SUMO2). Serine 321, serine 326, and serine 337 each carry phosphoserine. The segment covering glutamate 322 to alanine 332 has biased composition (acidic residues). Residues arginine 336–lysine 358 are compositionally biased toward basic and acidic residues. The tract at residues arginine 385–glutamate 448 is involved in chromatin-binding. 2 C2H2 AKAP95-type zinc fingers span residues cysteine 390–histidine 412 and cysteine 479–histidine 502. Residues serine 523 to threonine 565 are involved in condensin complex recruitment. Threonine 553 carries the post-translational modification Phosphothreonine. Lysine 563 is covalently cross-linked (Glycyl lysine isopeptide (Lys-Gly) (interchain with G-Cter in SUMO2)). The segment at glutamate 568–valine 585 is RII-binding. A required for interaction with MYCBP region spans residues glutamate 572 to glycine 589. The segment at valine 606 to glutamate 687 is disordered. The span at arginine 633 to asparagine 648 shows a compositional bias: basic and acidic residues. A compositionally biased stretch (low complexity) spans glutamate 649 to isoleucine 666. Position 659 is a phosphoserine (serine 659).

It belongs to the AKAP95 family. Binds to dimeric RII-alpha regulatory subunit of PKA during mitosis. Interacts (via C-terminus) with FIGN. Interacts with NCAPD2, CCND1, CCND3, MCM2, RPS6KA1, PDE4A, CASP3. Interacts with DDX5, CCNE1. Interacts with NFKB1; detetcted in the cytoplasm. Interacts with MYCBP; MYCBP is translocated to the nucleus and the interaction prevents the association of the PKA catalytic subunit leading to suppression of PKA activity. Interacts with DPY30; mediating AKAP8 association with at least the MLL4/WBP7 HMT complex. Interacts with HDAC3; increased during mitosis. Interacts with GJA1; in the nucleus and in the nuclear membrane; the nuclear association increases with progress of cell cycle G1, S and G2 phase and decreases in M phase. Phosphorylated on tyrosine residues probably by SRC subfamily protein kinases; multiple phosphorylation is leading to dissociation from nuclear structures implicated in chromatin structural changes. As to expression, widely expressed. The protein has been detected in liver, fibroblasts, granulosa, myoblast, lymphoma and Sertoli cells.

It localises to the nucleus matrix. Its subcellular location is the nucleus. It is found in the nucleolus. The protein resides in the cytoplasm. Functionally, anchoring protein that mediates the subcellular compartmentation of cAMP-dependent protein kinase (PKA type II). Acts as an anchor for a PKA-signaling complex onto mitotic chromosomes, which is required for maintenance of chromosomes in a condensed form throughout mitosis. Recruits condensin complex subunit NCAPD2 to chromosomes required for chromatin condensation; the function appears to be independent from PKA-anchoring. May help to deliver cyclin D/E to CDK4 to facilitate cell cycle progression. Required for cell cycle G2/M transition and histone deacetylation during mitosis. In mitotic cells recruits HDAC3 to the vicinity of chromatin leading to deacetylation and subsequent phosphorylation at 'Ser-10' of histone H3; in this function may act redundantly with AKAP8L. Involved in nuclear retention of RPS6KA1 upon ERK activation thus inducing cell proliferation. May be involved in regulation of DNA replication by acting as scaffold for MCM2. Enhances HMT activity of the KMT2 family MLL4/WBP7 complex and is involved in transcriptional regulation. In a teratocarcinoma cell line is involved in retinoic acid-mediated induction of developmental genes implicating H3 'Lys-4' methylation. May be involved in recruitment of active CASP3 to the nucleus in apoptotic cells. May act as a carrier protein of GJA1 for its transport to the nucleus. May play a repressive role in the regulation of rDNA transcription. Preferentially binds GC-rich DNA in vitro. In cells, associates with ribosomal RNA (rRNA) chromatin, preferentially with rRNA promoter and transcribed regions. Involved in modulation of Toll-like receptor signaling. Required for the cAMP-dependent suppression of TNF-alpha in early stages of LPS-induced macrophage activation; the function probably implicates targeting of PKA to NFKB1. The sequence is that of A-kinase anchor protein 8 (Akap8) from Rattus norvegicus (Rat).